The following is a 194-amino-acid chain: Probable nicotinate-nucleotide adenylyltransferase (194 aa).

Belongs to the NadD family.

The enzyme catalyses nicotinate beta-D-ribonucleotide + ATP + H(+) = deamido-NAD(+) + diphosphate. It functions in the pathway cofactor biosynthesis; NAD(+) biosynthesis; deamido-NAD(+) from nicotinate D-ribonucleotide: step 1/1. Functionally, catalyzes the reversible adenylation of nicotinate mononucleotide (NaMN) to nicotinic acid adenine dinucleotide (NaAD). The polypeptide is Probable nicotinate-nucleotide adenylyltransferase (Brucella abortus (strain 2308)).